The chain runs to 277 residues: Putative protease slr0021 (277 aa).

Serine 85 serves as the catalytic Nucleophile. Catalysis depends on lysine 137, which acts as the Proton donor/acceptor.

Belongs to the peptidase S49 family.

This is Putative protease slr0021 from Synechocystis sp. (strain ATCC 27184 / PCC 6803 / Kazusa).